A 530-amino-acid chain; its full sequence is T-box transcription factor TBX21 (530 aa).

The tract at residues 1–55 is disordered; it reads MGIVEPGCGDMLTGTEPMPSDEGRGPGADQQHRFFYPEPGAQDPTDRRAGSSLGT. Serine 52 carries the post-translational modification Phosphoserine. Threonine 55 is subject to Phosphothreonine. Phosphotyrosine is present on residues tyrosine 76 and tyrosine 117. A DNA-binding region (T-box) is located at residues 140 to 325; it reads LSNHLLWSKF…NNPFAKGFRE (186 aa). At tyrosine 219 the chain carries Phosphotyrosine; by ABL1. Serine 224 bears the Phosphoserine mark. A Phosphotyrosine; by ABL1 modification is found at tyrosine 265. Threonine 302 carries the post-translational modification Phosphothreonine. Position 304 is a phosphotyrosine; by ABL1 (tyrosine 304). Residue lysine 313 forms a Glycyl lysine isopeptide (Lys-Gly) (interchain with G-Cter in ubiquitin) linkage. The interval 444-530 is disordered; it reads AGWFRPMRTL…EGQFYNYFPN (87 aa). Residues 462–482 are compositionally biased toward polar residues; the sequence is SEEQGSSPSLWPEVTSLQPEP. Positions 498 to 515 are enriched in low complexity; sequence SPYPSSGDSSSPAGAPSP. Serine 508 carries the post-translational modification Phosphoserine. Tyrosine 525 bears the Phosphotyrosine; by ITK mark.

In terms of assembly, interacts with RUNX1 and RUNX3. Interacts with ITK. The phosphorylated form (at Tyr-525) interacts with GATA3. Interacts with ABL1. Interacts with RELA. The phosphorylated form (at Thr-302) interacts with NFATC2. Interacts with KDM6B. Interacts with SMARCA4 in a KDM6B-dependent manner. Interacts with CCTN1 and CDK9. Interacts with USP10. Phosphorylations at Ser-52, Tyr-76, Ser-224 and Ser-508 are regulated by mTORC1. Phosphorylation at Tyr-525 is essential for its interaction GATA3. Phosphorylation at Tyr-219, Tyr-265 and Tyr-304 enhances its transcriptional activator activity. Phosphorylation at Thr-302 is required for its interaction with NFATC2. In terms of processing, ubiquitinated at Lys-313, leading to its degradation by the proteasome. Ubiquitination is essential for controlling protein stability, binding to the T-box-binding element of the IFN-gamma promoter, and for interaction with NFATC2 through induction of phosphorylation at Thr-302. Deubiquitinated by USP10 leading to its stabilization. In terms of tissue distribution, T-cell specific. Expressed in regulatory T (TReg) cells.

Its subcellular location is the nucleus. Functionally, lineage-defining transcription factor which initiates Th1 lineage development from naive Th precursor cells both by activating Th1 genetic programs and by repressing the opposing Th2 and Th17 genetic programs. Activates transcription of a set of genes important for Th1 cell function, including those encoding IFN-gamma and the chemokine receptor CXCR3. Activates IFNG and CXCR3 genes in part by recruiting chromatin remodeling complexes including KDM6B, a SMARCA4-containing SWI/SNF-complex, and an H3K4me2-methyltransferase complex to their promoters and all of these complexes serve to establish a more permissive chromatin state conducive with transcriptional activation. Can activate Th1 genes also via recruitment of Mediator complex and P-TEFb (composed of CDK9 and CCNT1/cyclin-T1) in the form of the super elongation complex (SEC) to super-enhancers and associated genes in activated Th1 cells. Inhibits the Th17 cell lineage commitment by blocking RUNX1-mediated transactivation of Th17 cell-specific transcriptinal regulator RORC. Inhibits the Th2 cell lineage commitment by suppressing the production of Th2 cytokines, such as IL-4, IL-5, and IL- 13, via repression of transcriptional regulators GATA3 and NFATC2. Protects Th1 cells from amplifying aberrant type-I IFN response in an IFN-gamma abundant microenvironment by acting as a repressor of type-I IFN transcription factors and type-I IFN- stimulated genes. Acts as a regulator of antiviral B-cell responses; controls chronic viral infection by promoting the antiviral antibody IgG2a isotype switching and via regulation of a broad antiviral gene expression program. The sequence is that of T-box transcription factor TBX21 (Tbx21) from Mus musculus (Mouse).